Here is a 350-residue protein sequence, read N- to C-terminus: Farnesyl pyrophosphate synthase (350 aa).

Isopentenyl diphosphate-binding residues include Lys-55, Arg-58, and Gln-94. The Mg(2+) site is built by Asp-101 and Asp-105. Arg-110 serves as a coordination point for dimethylallyl diphosphate. Arg-111 is an isopentenyl diphosphate binding site. Lys-198, Thr-199, Gln-237, Lys-254, and Lys-263 together coordinate dimethylallyl diphosphate.

The protein belongs to the FPP/GGPP synthase family. Mg(2+) is required as a cofactor.

The protein resides in the cytoplasm. The catalysed reaction is isopentenyl diphosphate + dimethylallyl diphosphate = (2E)-geranyl diphosphate + diphosphate. The enzyme catalyses isopentenyl diphosphate + (2E)-geranyl diphosphate = (2E,6E)-farnesyl diphosphate + diphosphate. It participates in isoprenoid biosynthesis; farnesyl diphosphate biosynthesis; farnesyl diphosphate from geranyl diphosphate and isopentenyl diphosphate: step 1/1. The protein operates within isoprenoid biosynthesis; geranyl diphosphate biosynthesis; geranyl diphosphate from dimethylallyl diphosphate and isopentenyl diphosphate: step 1/1. Functionally, catalyzes the sequential condensation of isopentenyl pyrophosphate with the allylic pyrophosphates, dimethylallyl pyrophosphate, and then with the resultant geranylpyrophosphate to the ultimate product farnesyl pyrophosphate. The chain is Farnesyl pyrophosphate synthase (FPS) from Zea mays (Maize).